We begin with the raw amino-acid sequence, 315 residues long: tRNA dimethylallyltransferase (315 aa).

ATP is bound at residue Gly-13–Thr-20. Residue Thr-15–Thr-20 participates in substrate binding. Interaction with substrate tRNA stretches follow at residues Asp-38–Leu-41, Gln-162–Arg-166, and Arg-245–Arg-250.

This sequence belongs to the IPP transferase family. Monomer. The cofactor is Mg(2+).

It catalyses the reaction adenosine(37) in tRNA + dimethylallyl diphosphate = N(6)-dimethylallyladenosine(37) in tRNA + diphosphate. In terms of biological role, catalyzes the transfer of a dimethylallyl group onto the adenine at position 37 in tRNAs that read codons beginning with uridine, leading to the formation of N6-(dimethylallyl)adenosine (i(6)A). The protein is tRNA dimethylallyltransferase of Methylobacillus flagellatus (strain ATCC 51484 / DSM 6875 / VKM B-1610 / KT).